A 214-amino-acid polypeptide reads, in one-letter code: Thiamine-phosphate synthase (214 aa).

4-amino-2-methyl-5-(diphosphooxymethyl)pyrimidine contacts are provided by residues Gln37–Lys41 and Asn69. Mg(2+) is bound by residues Asp70 and Asp89. Position 108 (Ser108) interacts with 4-amino-2-methyl-5-(diphosphooxymethyl)pyrimidine. Residue Thr134–Ser136 coordinates 2-[(2R,5Z)-2-carboxy-4-methylthiazol-5(2H)-ylidene]ethyl phosphate. A 4-amino-2-methyl-5-(diphosphooxymethyl)pyrimidine-binding site is contributed by Lys137. Residues Gly167 and Ile187–Ser188 contribute to the 2-[(2R,5Z)-2-carboxy-4-methylthiazol-5(2H)-ylidene]ethyl phosphate site.

Belongs to the thiamine-phosphate synthase family. The cofactor is Mg(2+).

It carries out the reaction 2-[(2R,5Z)-2-carboxy-4-methylthiazol-5(2H)-ylidene]ethyl phosphate + 4-amino-2-methyl-5-(diphosphooxymethyl)pyrimidine + 2 H(+) = thiamine phosphate + CO2 + diphosphate. The catalysed reaction is 2-(2-carboxy-4-methylthiazol-5-yl)ethyl phosphate + 4-amino-2-methyl-5-(diphosphooxymethyl)pyrimidine + 2 H(+) = thiamine phosphate + CO2 + diphosphate. The enzyme catalyses 4-methyl-5-(2-phosphooxyethyl)-thiazole + 4-amino-2-methyl-5-(diphosphooxymethyl)pyrimidine + H(+) = thiamine phosphate + diphosphate. It participates in cofactor biosynthesis; thiamine diphosphate biosynthesis; thiamine phosphate from 4-amino-2-methyl-5-diphosphomethylpyrimidine and 4-methyl-5-(2-phosphoethyl)-thiazole: step 1/1. Functionally, condenses 4-methyl-5-(beta-hydroxyethyl)thiazole monophosphate (THZ-P) and 2-methyl-4-amino-5-hydroxymethyl pyrimidine pyrophosphate (HMP-PP) to form thiamine monophosphate (TMP). The chain is Thiamine-phosphate synthase from Natronomonas pharaonis (strain ATCC 35678 / DSM 2160 / CIP 103997 / JCM 8858 / NBRC 14720 / NCIMB 2260 / Gabara) (Halobacterium pharaonis).